Here is a 164-residue protein sequence, read N- to C-terminus: Ferritin heavy chain (164 aa).

The 141-residue stretch at 1–141 (AINRQINLEL…DHVTNLRKMG (141 aa)) folds into the Ferritin-like diiron domain. Fe cation contacts are provided by E9, E44, H47, E89, and Q123. S160 and S164 each carry phosphoserine.

The protein belongs to the ferritin family. Oligomer of 24 subunits. There are two types of subunits: L (light) chain and H (heavy) chain. The major chain can be light or heavy, depending on the species and tissue type. The functional molecule forms a roughly spherical shell with a diameter of 12 nm and contains a central cavity into which the insoluble mineral iron core is deposited. Interacts with NCOA4; NCOA4 promotes targeting of the iron-binding ferritin complex to autolysosomes following starvation or iron depletion.

Its subcellular location is the cytoplasm. The protein localises to the lysosome. The protein resides in the cytoplasmic vesicle. It is found in the autophagosome. The enzyme catalyses 4 Fe(2+) + O2 + 4 H(+) = 4 Fe(3+) + 2 H2O. In terms of biological role, stores iron in a soluble, non-toxic, readily available form. Important for iron homeostasis. Has ferroxidase activity. Iron is taken up in the ferrous form and deposited as ferric hydroxides after oxidation. Also plays a role in delivery of iron to cells. Mediates iron uptake in capsule cells of the developing kidney. Delivery to lysosomes is mediated by the cargo receptor NCOA4 for autophagic degradation and release of iron. The chain is Ferritin heavy chain (FTH1) from Oryctolagus cuniculus (Rabbit).